We begin with the raw amino-acid sequence, 250 residues long: Small ribosomal subunit protein uS3 (250 aa).

Positions 39–111 constitute a KH type-2 domain; it reads IRPLIKNHYP…KVQINIFEVK (73 aa).

It belongs to the universal ribosomal protein uS3 family. In terms of assembly, part of the 30S ribosomal subunit. Forms a tight complex with proteins S10 and S14.

In terms of biological role, binds the lower part of the 30S subunit head. Binds mRNA in the 70S ribosome, positioning it for translation. The protein is Small ribosomal subunit protein uS3 of Ziziphus jujuba witches'-broom phytoplasma.